A 206-amino-acid polypeptide reads, in one-letter code: Homoserine/homoserine lactone efflux protein (206 aa).

Helical transmembrane passes span 5 to 25, 45 to 65, 68 to 88, 117 to 137, 148 to 168, and 182 to 202; these read WWFA…SGAI, GLQT…GTLF, SVIA…WLGI, FVNL…PQFI, IVLG…YATL, and MKAL…LLAS.

It belongs to the Rht family.

The protein localises to the cell membrane. Its function is as follows. Conducts the efflux of homoserine and homoserine lactone. This Escherichia coli O157:H7 protein is Homoserine/homoserine lactone efflux protein (rhtB).